Here is a 210-residue protein sequence, read N- to C-terminus: V-type sodium ATPase subunit D (210 aa).

It belongs to the V-ATPase D subunit family.

Involved in ATP-driven sodium extrusion. The chain is V-type sodium ATPase subunit D (ntpD) from Enterococcus hirae (strain ATCC 9790 / DSM 20160 / JCM 8729 / LMG 6399 / NBRC 3181 / NCIMB 6459 / NCDO 1258 / NCTC 12367 / WDCM 00089 / R).